A 314-amino-acid polypeptide reads, in one-letter code: Carbamate kinase (314 aa).

It belongs to the carbamate kinase family. Homodimer.

It is found in the cytoplasm. It catalyses the reaction hydrogencarbonate + NH4(+) + ATP = carbamoyl phosphate + ADP + H2O + H(+). The polypeptide is Carbamate kinase (cpkA) (Pyrococcus horikoshii (strain ATCC 700860 / DSM 12428 / JCM 9974 / NBRC 100139 / OT-3)).